The sequence spans 348 residues: Large ribosomal subunit protein uL10 (348 aa).

The segment at 291–348 (LPEELRGVSAADTGAAEEEESTDEEAADADQADAAEDDDAADDDGDDEDAGDALGSLF) is disordered. The span at 305 to 341 (AAEEEESTDEEAADADQADAAEDDDAADDDGDDEDAG) shows a compositional bias: acidic residues.

The protein belongs to the universal ribosomal protein uL10 family. In terms of assembly, part of the 50S ribosomal subunit. Forms part of the ribosomal stalk which helps the ribosome interact with GTP-bound translation factors. Forms a heptameric L10(L12)2(L12)2(L12)2 complex, where L10 forms an elongated spine to which the L12 dimers bind in a sequential fashion.

Forms part of the ribosomal stalk, playing a central role in the interaction of the ribosome with GTP-bound translation factors. The chain is Large ribosomal subunit protein uL10 from Haloferax volcanii (strain ATCC 29605 / DSM 3757 / JCM 8879 / NBRC 14742 / NCIMB 2012 / VKM B-1768 / DS2) (Halobacterium volcanii).